Reading from the N-terminus, the 361-residue chain is tRNA-specific 2-thiouridylase MnmA (361 aa).

ATP is bound by residues 8–15 (AMSGGVDS) and Met35. The interval 95–97 (NPD) is interaction with target base in tRNA. Cys100 functions as the Nucleophile in the catalytic mechanism. A disulfide bond links Cys100 and Cys196. Gly124 contacts ATP. The tract at residues 146 to 148 (KDQ) is interaction with tRNA. Cys196 functions as the Cysteine persulfide intermediate in the catalytic mechanism. The interval 303-304 (RY) is interaction with tRNA.

This sequence belongs to the MnmA/TRMU family.

Its subcellular location is the cytoplasm. It catalyses the reaction S-sulfanyl-L-cysteinyl-[protein] + uridine(34) in tRNA + AH2 + ATP = 2-thiouridine(34) in tRNA + L-cysteinyl-[protein] + A + AMP + diphosphate + H(+). In terms of biological role, catalyzes the 2-thiolation of uridine at the wobble position (U34) of tRNA, leading to the formation of s(2)U34. This Chlamydia felis (strain Fe/C-56) (Chlamydophila felis) protein is tRNA-specific 2-thiouridylase MnmA.